The sequence spans 431 residues: MKILVIGSGGREHALAWKIAQSARVSEVLVAPGNAGTATEAKCRNVAIKVDDLDGLLALAQREAVALTVVGPEVPLVLGVVDRFHAAGLRIFGPTAKAAQLEGSKAFAKDFLARHGIPTAYYAVHTEVDAALAYVREKGAPIVVKADGLAAGKGVIVAMTLGEAEDAVRDMLSGNAFGDAGARVVIEEFLDGEEASFISMVDGTHALPMATSQDHKRVGDGDTGPNTGGMGAYSPAPVVTPEVHARVMREVVEPTVQGMIADGVPFTGFLYAGLMIDAHGAPKVIEFNVRFGDPETQPVMLRLQSDLVDLVEAAIDGTLDAAQAQWDPRPSLGVVIAAKPYPETPVTGEVITGLDAVPASAKVFHAGTALNAEGQVISAGGRVLCVAALGDSVLDAQRTAYAGLQPIQWASAFQRSDIGWRAIARERDAQA.

The 208-residue stretch at 109–316 (KDFLARHGIP…LVDLVEAAID (208 aa)) folds into the ATP-grasp domain. An ATP-binding site is contributed by 135-196 (VREKGAPIVV…EEFLDGEEAS (62 aa)). Positions 286 and 288 each coordinate Mg(2+).

This sequence belongs to the GARS family. The cofactor is Mg(2+). Mn(2+) is required as a cofactor.

The catalysed reaction is 5-phospho-beta-D-ribosylamine + glycine + ATP = N(1)-(5-phospho-beta-D-ribosyl)glycinamide + ADP + phosphate + H(+). Its pathway is purine metabolism; IMP biosynthesis via de novo pathway; N(1)-(5-phospho-D-ribosyl)glycinamide from 5-phospho-alpha-D-ribose 1-diphosphate: step 2/2. The protein is Phosphoribosylamine--glycine ligase of Xanthomonas campestris pv. campestris (strain ATCC 33913 / DSM 3586 / NCPPB 528 / LMG 568 / P 25).